The chain runs to 379 residues: Cytoplasmic tRNA 2-thiolation protein 1 (379 aa).

This sequence belongs to the TtcA family. CTU1/NCS6/ATPBD3 subfamily.

The protein resides in the cytoplasm. Its pathway is tRNA modification; 5-methoxycarbonylmethyl-2-thiouridine-tRNA biosynthesis. Functionally, plays a central role in 2-thiolation of mcm(5)S(2)U at tRNA wobble positions of tRNA(Lys), tRNA(Glu) and tRNA(Gln). Directly binds tRNAs and probably acts by catalyzing adenylation of tRNAs, an intermediate required for 2-thiolation. It is unclear whether it acts as a sulfurtransferase that transfers sulfur from thiocarboxylated URM1 onto the uridine of tRNAs at wobble position. Prior mcm(5) tRNA modification by the elongator complex is required for 2-thiolation. May also be involved in protein urmylation. The protein is Cytoplasmic tRNA 2-thiolation protein 1 of Lodderomyces elongisporus (strain ATCC 11503 / CBS 2605 / JCM 1781 / NBRC 1676 / NRRL YB-4239) (Yeast).